A 183-amino-acid chain; its full sequence is MKNLIIAKRYSKALFNLAEEGRMIEQYGEELDNFVRLLGKLPELADALRNPLFPEATRKAIFAAVAEQLALTPIVRSFINLLIVKKRVEHLESIAQYYHRLIDEYSNVARAQVKAAIDLDEKVIQEIAKTLEKMTGKKIVVEFQKDPSLIGGVLAQIGDFVLDGSVKRQLLNFKETLKRGALG.

It belongs to the ATPase delta chain family. In terms of assembly, F-type ATPases have 2 components, F(1) - the catalytic core - and F(0) - the membrane proton channel. F(1) has five subunits: alpha(3), beta(3), gamma(1), delta(1), epsilon(1). F(0) has three main subunits: a(1), b(2) and c(10-14). The alpha and beta chains form an alternating ring which encloses part of the gamma chain. F(1) is attached to F(0) by a central stalk formed by the gamma and epsilon chains, while a peripheral stalk is formed by the delta and b chains.

Its subcellular location is the cell inner membrane. Functionally, f(1)F(0) ATP synthase produces ATP from ADP in the presence of a proton or sodium gradient. F-type ATPases consist of two structural domains, F(1) containing the extramembraneous catalytic core and F(0) containing the membrane proton channel, linked together by a central stalk and a peripheral stalk. During catalysis, ATP synthesis in the catalytic domain of F(1) is coupled via a rotary mechanism of the central stalk subunits to proton translocation. Its function is as follows. This protein is part of the stalk that links CF(0) to CF(1). It either transmits conformational changes from CF(0) to CF(1) or is implicated in proton conduction. This is ATP synthase subunit delta from Syntrophobacter fumaroxidans (strain DSM 10017 / MPOB).